The following is a 508-amino-acid chain: MAKEQVQAITKMEEDFAQWYTDIVKKAELVDYSSVKGCMILRPYGYALWENMQKVMDEKLKATGHENVYMPMFIPESLLQKEKDHVEGFAPEVAWVTHGGDEKLAERLCVRPTSETLFCEHFSKIVQSYNDLPKLYNQWCSVVRWEKTTRPFLRTTEFLWQEGHTIHETAEESQAETLNILNLYASFCEDYLAIPVIKGQKTEKEKFAGAKATYTIESLMHDGKALQTGTSHNFGTNFSEAFDIKFLDRNGKWQYVHQTSWGVSTRMIGGLIMVHSDNNGLVMPPKVAPVQVVIVPIAQHKEGVLAKATELQGHIQKVARVKIDASNKTPGWKFNEYEMKGIPIRLEVGPKDIEKNQVVLVRRDTKEKEFISMDQLEERIPALLEEIHNSLFNKAKVFRDENTYSVTNFEEMKKLADEKQGFIKAMWCGELACEEKLKEEVASRCMPFEQEHLAEECVCCVNKWCIGEKRINALLDRKDEKDFGLHNKCNPKSFLVLQFVSCIFKMEG.

Belongs to the class-II aminoacyl-tRNA synthetase family. ProS type 3 subfamily. In terms of assembly, homodimer.

It is found in the cytoplasm. The catalysed reaction is tRNA(Pro) + L-proline + ATP = L-prolyl-tRNA(Pro) + AMP + diphosphate. Functionally, catalyzes the attachment of proline to tRNA(Pro) in a two-step reaction: proline is first activated by ATP to form Pro-AMP and then transferred to the acceptor end of tRNA(Pro). In Bacillus anthracis, this protein is Proline--tRNA ligase 2.